Here is a 326-residue protein sequence, read N- to C-terminus: Probable cell division protein WhiA (326 aa).

The H-T-H motif DNA-binding region spans 275-308 (SLEELGALADPPLTKDAIAGRIRRLLALADKRAR).

This sequence belongs to the WhiA family.

Functionally, involved in cell division and chromosome segregation. This is Probable cell division protein WhiA from Salinispora tropica (strain ATCC BAA-916 / DSM 44818 / JCM 13857 / NBRC 105044 / CNB-440).